The following is a 362-amino-acid chain: MASESTILSNAENLKKFLRLPQNGQLIAEYIWIDSEGGTRSKSRTLPEKESQYLPEELPIWNFDGSSTGQAPGENSDVYLKPVAVFPDPFRGSPNILVLSECWNADGTPNKFNHRHEAAKLMEAHADQVPWFGLEQEYTLLDINDRPYGWPRNGFPAPQGPYYCGVGTGKVVQRDIVEAHYKCCLYAGVKISGTNAEVMPAQWEFQVGPCDGIEMGDHLWLARFLLHRVSEEFGAKVSFDPKPIPGDWNGAGLHTNFSTENMRKEGGMKYIEDAIKKLEARHKEHIAVYGEGNDKRLTGRHETGSIDSFTYGVANRGASIRIPRECGAKGYGYFEDRRPASNADPYQITGIIMETCFGAVSE.

In terms of domain architecture, GS beta-grasp spans 26-107; it reads LIAEYIWIDS…VLSECWNADG (82 aa). The 249-residue stretch at 114 to 362 folds into the GS catalytic domain; it reads HRHEAAKLME…METCFGAVSE (249 aa).

This sequence belongs to the glutamine synthetase family. In terms of assembly, homooctamer.

The protein localises to the cytoplasm. The catalysed reaction is L-glutamate + NH4(+) + ATP = L-glutamine + ADP + phosphate + H(+). This chain is Glutamine synthetase (gln-1), found in Neurospora crassa (strain ATCC 24698 / 74-OR23-1A / CBS 708.71 / DSM 1257 / FGSC 987).